A 216-amino-acid polypeptide reads, in one-letter code: uncharacterized protein (216 aa).

Positions 1 to 17 (MLKKIIILFLGMFLLSA) are cleaved as a signal peptide. The N-palmitoyl cysteine moiety is linked to residue Cys18. Cys18 carries S-diacylglycerol cysteine lipidation. The stretch at 133–162 (SDKEKKIQEELNQIKAMLRETKRDISKYTC) forms a coiled coil.

Its subcellular location is the cell membrane. This is an uncharacterized protein from Rickettsia conorii (strain ATCC VR-613 / Malish 7).